Reading from the N-terminus, the 154-residue chain is Large ribosomal subunit protein bL9 (154 aa).

The protein belongs to the bacterial ribosomal protein bL9 family.

Functionally, binds to the 23S rRNA. The sequence is that of Large ribosomal subunit protein bL9 from Buchnera aphidicola subsp. Baizongia pistaciae (strain Bp).